Consider the following 275-residue polypeptide: MTSTPIERAVYIVSDSTGITAETFSHSVLSQFDEVNFKPVRLPFIDTLDKAREVVARINRNALEAGVPPIVFSTLVNPEILALVRQSNGVFLDLFGTFVSHIEQALGLKSSHSIGRSHMAANSEKYRNRIDAINFSLAHDDGQFVNQLDQADVILLGVSRCGKTPTSLYLAMQYAVKAANFPLTPDDFERGALPKTIAPYRGKLFGLSIQPERLAEVRNERRPNSHYARLEQCRYEVAEAERMMRREGISWLSTTTKSIEEIATTVLQEVGLERV.

157 to 164 (GVSRCGKT) is a binding site for ADP.

The protein belongs to the pyruvate, phosphate/water dikinase regulatory protein family. PSRP subfamily.

It catalyses the reaction [pyruvate, water dikinase] + ADP = [pyruvate, water dikinase]-phosphate + AMP + H(+). It carries out the reaction [pyruvate, water dikinase]-phosphate + phosphate + H(+) = [pyruvate, water dikinase] + diphosphate. In terms of biological role, bifunctional serine/threonine kinase and phosphorylase involved in the regulation of the phosphoenolpyruvate synthase (PEPS) by catalyzing its phosphorylation/dephosphorylation. This Bordetella pertussis (strain Tohama I / ATCC BAA-589 / NCTC 13251) protein is Putative phosphoenolpyruvate synthase regulatory protein.